A 105-amino-acid polypeptide reads, in one-letter code: Gastrin/cholecystokinin-like peptide (105 aa).

A signal peptide spans 1–20 (MKTKVFLGLILSAAVTACLC). The propeptide occupies 21-38 (RPAAKAPGGSHRPTSSLA). The tract at residues 24-51 (AKAPGGSHRPTSSLARRDWPEPPSQEQQ) is disordered. Position 87 is a sulfotyrosine (Tyr87). Phe93 carries the phenylalanine amide modification. A propeptide spanning residues 97–105 (STEDAADAA) is cleaved from the precursor.

Belongs to the gastrin/cholecystokinin family.

It localises to the secreted. Potent stimulus of gastric acid, but not of pancreatic secretion. In Gallus gallus (Chicken), this protein is Gastrin/cholecystokinin-like peptide.